The following is a 279-amino-acid chain: Large ribosomal subunit protein uL2 (279 aa).

The tract at residues 223 to 279 (VVMNPVDHPHGGGEGRTSGGRHPVSPWGQPTKGYKTRRSARPSDKFIVQKRKRNRNR) is disordered. Basic residues predominate over residues 270–279 (VQKRKRNRNR).

The protein belongs to the universal ribosomal protein uL2 family. Part of the 50S ribosomal subunit. Forms a bridge to the 30S subunit in the 70S ribosome.

In terms of biological role, one of the primary rRNA binding proteins. Required for association of the 30S and 50S subunits to form the 70S ribosome, for tRNA binding and peptide bond formation. It has been suggested to have peptidyltransferase activity; this is somewhat controversial. Makes several contacts with the 16S rRNA in the 70S ribosome. This Leptospira borgpetersenii serovar Hardjo-bovis (strain JB197) protein is Large ribosomal subunit protein uL2.